The sequence spans 186 residues: uncharacterized protein (186 aa).

It to M.jannaschii MJ0208.

This is an uncharacterized protein from Methanocaldococcus jannaschii (strain ATCC 43067 / DSM 2661 / JAL-1 / JCM 10045 / NBRC 100440) (Methanococcus jannaschii).